The chain runs to 274 residues: NADPH-dependent 7-cyano-7-deazaguanine reductase (274 aa).

Residue 80–82 (VES) coordinates substrate. 82-83 (SK) lines the NADPH pocket. Cysteine 181 acts as the Thioimide intermediate in catalysis. Residue aspartate 188 is the Proton donor of the active site. Substrate is bound at residue 220–221 (HE). Position 249 to 250 (249 to 250 (RG)) interacts with NADPH.

The protein belongs to the GTP cyclohydrolase I family. QueF type 2 subfamily. Homodimer.

It localises to the cytoplasm. The catalysed reaction is 7-aminomethyl-7-carbaguanine + 2 NADP(+) = 7-cyano-7-deazaguanine + 2 NADPH + 3 H(+). Its pathway is tRNA modification; tRNA-queuosine biosynthesis. Its function is as follows. Catalyzes the NADPH-dependent reduction of 7-cyano-7-deazaguanine (preQ0) to 7-aminomethyl-7-deazaguanine (preQ1). This chain is NADPH-dependent 7-cyano-7-deazaguanine reductase, found in Paraburkholderia phymatum (strain DSM 17167 / CIP 108236 / LMG 21445 / STM815) (Burkholderia phymatum).